The sequence spans 102 residues: Small ribosomal subunit protein uS10 (102 aa).

The protein belongs to the universal ribosomal protein uS10 family. In terms of assembly, part of the 30S ribosomal subunit.

Involved in the binding of tRNA to the ribosomes. This Rhodopseudomonas palustris (strain HaA2) protein is Small ribosomal subunit protein uS10.